The following is a 113-amino-acid chain: Sensorin-A (113 aa).

The first 32 residues, 1–32 (MPSRAATSPLNVQMMVVLCIVCLALQAVAANA), serve as a signal peptide directing secretion. Residue phenylalanine 54 is modified to Phenylalanine amide. Positions 58-113 (SSSETYSTNLINLLSRQLVSQEELRAILEKQPILLDEVVKILDRNDDGYITVADLL) are excised as a propeptide. The EF-hand domain maps to 87–113 (KQPILLDEVVKILDRNDDGYITVADLL). Ca(2+) is bound by residues aspartate 100, asparagine 102, aspartate 104, tyrosine 106, and aspartate 111.

Seems to be specific to the mechanosensory neurons of the central nervous system.

It localises to the secreted. Its function is as follows. May function as an inhibitory cotransmitter acting in conjunction with the fast excitatory transmitter released by sensory neurons. The peptide selectively inhibits certain postsynaptic cells probably by means of sensorin A release. The sequence is that of Sensorin-A (PSC1) from Aplysia californica (California sea hare).